A 606-amino-acid polypeptide reads, in one-letter code: Albumin A (606 aa).

Residues 1–18 (MKWITLICLLISSTLIES) form the signal peptide. Residues 19–24 (RIIFKR) constitute a propeptide that is removed on maturation. 3 Albumin domains span residues 22–211 (FKRD…ELMK), 212–401 (HSHS…RFMN), and 402–599 (EAKE…VLIE). Residue histidine 30 coordinates Cu cation. Disulfide bonds link cysteine 80–cysteine 89, cysteine 102–cysteine 118, cysteine 117–cysteine 128, cysteine 148–cysteine 193, cysteine 192–cysteine 201, cysteine 224–cysteine 270, cysteine 269–cysteine 277, cysteine 289–cysteine 303, cysteine 302–cysteine 313, cysteine 340–cysteine 383, cysteine 382–cysteine 391, cysteine 414–cysteine 460, cysteine 459–cysteine 470, cysteine 483–cysteine 499, cysteine 498–cysteine 509, cysteine 536–cysteine 581, and cysteine 580–cysteine 589.

Belongs to the ALB/AFP/VDB family. As to expression, plasma.

It localises to the secreted. Binds water, Ca(2+), Na(+), K(+), fatty acids, hormones, bilirubin and drugs. Its main function is the regulation of the colloidal osmotic pressure of blood. This chain is Albumin A (alb-a), found in Xenopus laevis (African clawed frog).